A 1192-amino-acid polypeptide reads, in one-letter code: Probable ATP-binding protein BrxC (1192 aa).

It belongs to the BrxC family.

Its function is as follows. BREX systems (bacteriophage exclusion) provide immunity against bacteriophage. A core protein of a type 1 BREX system. This system allows phage adsorption but prevents phage DNA replication, without degradation of the phage DNA. Methylation of bacterial DNA by PglX probably guides self/non-self discrimination. When the brxA-brxB-brxC-pglX and pglZ-brxL operons are transformed into a susceptible B.subtilis strain (BEST7003) they confer resistance to bacteriophages SPbeta, SP16, Zeta, phi3T and SP02 and partial protection to phages SP01 and SP82G (these include lytic and temperate phage). They do not protect against phages phi105, rho10 or rho14. Additionally confers a very slight reduction in efficiency of plasmid transformation. This Bacillus cereus (strain H3081.97) protein is Probable ATP-binding protein BrxC.